A 358-amino-acid polypeptide reads, in one-letter code: Alanine racemase (358 aa).

The Proton acceptor; specific for D-alanine role is filled by Lys-35. Position 35 is an N6-(pyridoxal phosphate)lysine (Lys-35). Arg-130 contacts substrate. The active-site Proton acceptor; specific for L-alanine is the Tyr-255. Met-303 lines the substrate pocket.

It belongs to the alanine racemase family. Pyridoxal 5'-phosphate is required as a cofactor.

It carries out the reaction L-alanine = D-alanine. Its pathway is amino-acid biosynthesis; D-alanine biosynthesis; D-alanine from L-alanine: step 1/1. Catalyzes the interconversion of L-alanine and D-alanine. May also act on other amino acids. The sequence is that of Alanine racemase (alr) from Shewanella sp. (strain ANA-3).